The sequence spans 318 residues: MTLIDNHEAVGMEGVPRLSEASARDYFELLKPRVMSLVVFTAFAGLVLAPGQINPVIGFIAILCIAIGAGASGALNMWYDADIDAVMSRTAKRPIPAGKILPQEALAFGLTLSAFSVIILGLAVNWLAAGLLAFTIFFYVVIYTMWLKRSTPQNIVIGGAAGAFPPMIGWACVTGGVSVESIVLFLIIFLWTPAHFWALALFKMGDYGAVGVPMMPNVCGEATTKRQIVVYALLTALSGICPTLLGFASLGYGAFATALGLGFIWYSLAVLRMPEADKRMLPAKKLFAFSIAYLFAIFSALLVDYMIAHVWLDAGGII.

A run of 9 helical transmembrane segments spans residues 34–54 (VMSLVVFTAFAGLVLAPGQIN), 55–75 (PVIGFIAILCIAIGAGASGAL), 95–115 (IPAGKILPQEALAFGLTLSAF), 118–138 (IILGLAVNWLAAGLLAFTIFF), 155–175 (IVIGGAAGAFPPMIGWACVTG), 182–202 (IVLFLIIFLWTPAHFWALALF), 228–250 (IVVYALLTALSGICPTLLGFASL), 254–273 (AFATALGLGFIWYSLAVLRM), and 287–307 (FAFSIAYLFAIFSALLVDYMI).

It belongs to the UbiA prenyltransferase family. Protoheme IX farnesyltransferase subfamily.

The protein resides in the cell inner membrane. It carries out the reaction heme b + (2E,6E)-farnesyl diphosphate + H2O = Fe(II)-heme o + diphosphate. It participates in porphyrin-containing compound metabolism; heme O biosynthesis; heme O from protoheme: step 1/1. Converts heme B (protoheme IX) to heme O by substitution of the vinyl group on carbon 2 of heme B porphyrin ring with a hydroxyethyl farnesyl side group. The polypeptide is Protoheme IX farnesyltransferase (Sinorhizobium fredii (strain NBRC 101917 / NGR234)).